The primary structure comprises 254 residues: Ribosomal RNA large subunit methyltransferase E (254 aa).

Positions 1 to 28 (MTTPPRGPDGRPLKVRVKKSRGRTTSSQ) are disordered. Over residues 13 to 22 (LKVRVKKSRG) the composition is skewed to basic residues. Residues Gly-80, Trp-82, Asp-103, Asp-119, and Asp-143 each coordinate S-adenosyl-L-methionine. The active-site Proton acceptor is Lys-183. Residues 231–254 (DRAETDDAGTDGTGTAEAQAPRDQ) form a disordered region.

Belongs to the class I-like SAM-binding methyltransferase superfamily. RNA methyltransferase RlmE family.

It is found in the cytoplasm. The enzyme catalyses uridine(2552) in 23S rRNA + S-adenosyl-L-methionine = 2'-O-methyluridine(2552) in 23S rRNA + S-adenosyl-L-homocysteine + H(+). Functionally, specifically methylates the uridine in position 2552 of 23S rRNA at the 2'-O position of the ribose in the fully assembled 50S ribosomal subunit. The protein is Ribosomal RNA large subunit methyltransferase E of Xanthobacter autotrophicus (strain ATCC BAA-1158 / Py2).